A 216-amino-acid polypeptide reads, in one-letter code: MPLFVLSKPITLHFLTQLRSKNTDQITFRKTLVRLGRIIGYEILNMLDYNIIEVETPLGVKAKGVYIYDLENIVIISILRAATPLVEGLLKALPTARLGVIAASRKETQVNLGYPKEMEVEIFYNKIPEINIKDNVIIADPMIATASTMLKALNIIKDKKPKRIFIVSIIISEYGLKRILESYPDVNIITVSIDPELDNRGYILPGLGDAGDRAFG.

Residue 30 to 34 (KTLVR) coordinates GTP. Residues Arg80, Arg105, and 140 to 148 (DPMIATAST) each bind 5-phospho-alpha-D-ribose 1-diphosphate. Uracil is bound by residues Ile203 and 208–210 (GDA). Asp209 contacts 5-phospho-alpha-D-ribose 1-diphosphate.

This sequence belongs to the UPRTase family. The cofactor is Mg(2+).

It carries out the reaction UMP + diphosphate = 5-phospho-alpha-D-ribose 1-diphosphate + uracil. Its pathway is pyrimidine metabolism; UMP biosynthesis via salvage pathway; UMP from uracil: step 1/1. With respect to regulation, allosterically activated by GTP. Functionally, catalyzes the conversion of uracil and 5-phospho-alpha-D-ribose 1-diphosphate (PRPP) to UMP and diphosphate. In Sulfurisphaera tokodaii (strain DSM 16993 / JCM 10545 / NBRC 100140 / 7) (Sulfolobus tokodaii), this protein is Uracil phosphoribosyltransferase.